Here is a 348-residue protein sequence, read N- to C-terminus: Putative transport protein HP_0567 (348 aa).

A run of 8 helical transmembrane segments spans residues Phe-6 to Leu-26, Met-27 to Asp-47, Ser-56 to Tyr-76, Leu-143 to Gly-163, Ile-194 to Ile-214, Leu-224 to Ile-244, Ser-266 to Ile-286, and Met-300 to Val-320.

It belongs to the autoinducer-2 exporter (AI-2E) (TC 2.A.86) family.

The protein resides in the cell membrane. The sequence is that of Putative transport protein HP_0567 from Helicobacter pylori (strain ATCC 700392 / 26695) (Campylobacter pylori).